We begin with the raw amino-acid sequence, 372 residues long: Pluviatolide O-methyltransferase (372 aa).

5 residues coordinate S-adenosyl-L-homocysteine: Gly-214, Asp-237, Asp-257, Met-258, and Lys-271. His-275 serves as the catalytic Proton acceptor. Active-site residues include Asp-306 and Glu-338.

The protein belongs to the class I-like SAM-binding methyltransferase superfamily. Cation-independent O-methyltransferase family. COMT subfamily. As to quaternary structure, homodimer. As to expression, mostly expressed in stems, and, to a lower extent, in leaves.

The catalysed reaction is (-)-pluviatolide + S-adenosyl-L-methionine = (-)-bursehernin + S-adenosyl-L-homocysteine + H(+). It participates in aromatic compound metabolism; phenylpropanoid biosynthesis. O-methyltransferase involved in the biosynthesis of etoposide, a chemotherapeutic compound of the topoisomerase inhibitor family. Catalyzes the methylation of (-)-pluviatolide to produce (-)-bursehernin. The polypeptide is Pluviatolide O-methyltransferase (Sinopodophyllum hexandrum (Himalayan may apple)).